Reading from the N-terminus, the 320-residue chain is Probable serine proteinase inhibitor 1 (320 aa).

It belongs to the serpin family. Poxviruses subfamily.

This is Probable serine proteinase inhibitor 1 (SPI-1) from Swinepox virus (strain Kasza) (SWPV).